Here is a 493-residue protein sequence, read N- to C-terminus: Glutamyl-tRNA(Gln) amidotransferase subunit A (493 aa).

Catalysis depends on charge relay system residues K78 and S158. Residue S182 is the Acyl-ester intermediate of the active site.

The protein belongs to the amidase family. GatA subfamily. As to quaternary structure, heterotrimer of A, B and C subunits.

It catalyses the reaction L-glutamyl-tRNA(Gln) + L-glutamine + ATP + H2O = L-glutaminyl-tRNA(Gln) + L-glutamate + ADP + phosphate + H(+). Its function is as follows. Allows the formation of correctly charged Gln-tRNA(Gln) through the transamidation of misacylated Glu-tRNA(Gln) in organisms which lack glutaminyl-tRNA synthetase. The reaction takes place in the presence of glutamine and ATP through an activated gamma-phospho-Glu-tRNA(Gln). This chain is Glutamyl-tRNA(Gln) amidotransferase subunit A, found in Methylorubrum populi (strain ATCC BAA-705 / NCIMB 13946 / BJ001) (Methylobacterium populi).